We begin with the raw amino-acid sequence, 345 residues long: 3-dehydroquinate synthase (345 aa).

Residues D62–K67, G96–D100, T120–T121, K133, K142, and F160–T163 contribute to the NAD(+) site. Residues E175, H233, and H250 each coordinate Zn(2+).

Belongs to the sugar phosphate cyclases superfamily. Dehydroquinate synthase family. It depends on Co(2+) as a cofactor. Zn(2+) serves as cofactor. Requires NAD(+) as cofactor.

The protein resides in the cytoplasm. The catalysed reaction is 7-phospho-2-dehydro-3-deoxy-D-arabino-heptonate = 3-dehydroquinate + phosphate. The protein operates within metabolic intermediate biosynthesis; chorismate biosynthesis; chorismate from D-erythrose 4-phosphate and phosphoenolpyruvate: step 2/7. In terms of biological role, catalyzes the conversion of 3-deoxy-D-arabino-heptulosonate 7-phosphate (DAHP) to dehydroquinate (DHQ). This chain is 3-dehydroquinate synthase, found in Campylobacter concisus (strain 13826).